A 542-amino-acid chain; its full sequence is Putative inactive cadmium/zinc-transporting ATPase HMA3 (542 aa).

Topologically, residues 1 to 89 (MAEGEESKKM…VRPYGETSLK (89 aa)) are cytoplasmic. Residues 13–79 (QTSYFDVVGI…ALNQARLEAS (67 aa)) form the HMA domain. The helical transmembrane segment at 90 to 111 (SQWPSPFAIVSGVLLVLSFFKY) threads the bilayer. The Extracellular segment spans residues 112–114 (FYS). A helical membrane pass occupies residues 115–134 (PLEWLAIVAVVAGVFPILAK). Topologically, residues 135 to 141 (AVASVTR) are cytoplasmic. Residues 142–162 (FRLDINALTLIAVIATLCMQD) traverse the membrane as a helical segment. F163 is a topological domain (extracellular). A helical transmembrane segment spans residues 164-184 (TEAATIVFLFSVADWLESSAA). Over 185-310 (HKASIVMSSL…QTKTQRFIDK (126 aa)) the chain is Cytoplasmic. Residues 311–333 (CSRYYTPAVVVSAACFAVIPVLL) traverse the membrane as a helical segment. The Extracellular segment spans residues 334–341 (KVQDLSHW). The helical transmembrane segment at 342 to 359 (FHLALVVLVSGCPCGLIL) threads the bilayer. Residues 360-542 (STPVATFCAL…VAQALKELKS (183 aa)) lie on the Cytoplasmic side of the membrane.

Belongs to the cation transport ATPase (P-type) (TC 3.A.3) family. Type IB subfamily.

Its subcellular location is the membrane. The sequence is that of Putative inactive cadmium/zinc-transporting ATPase HMA3 (HMA3) from Arabidopsis thaliana (Mouse-ear cress).